A 919-amino-acid chain; its full sequence is Glutamate receptor ionotropic, kainate 3 (919 aa).

Positions 1 to 31 (MTAPWRRLRSLVWEYWAGLLVCAFWIPDSRG) are cleaved as a signal peptide. Residues 32–563 (MPHVIRIGGI…VFSFLNPLSP (532 aa)) lie on the Extracellular side of the membrane. Residues asparagine 70, asparagine 76, asparagine 278, asparagine 381, asparagine 415, asparagine 426, and asparagine 433 are each glycosylated (N-linked (GlcNAc...) asparagine). Cysteine 99 and cysteine 350 are disulfide-bonded. L-glutamate is bound by residues proline 518, threonine 520, and arginine 525. N-linked (GlcNAc...) asparagine glycans are attached at residues asparagine 548 and asparagine 551. A helical transmembrane segment spans residues 564–584 (DIWMYVLLAYLGVSCVLFVIA). Topologically, residues 585 to 636 (RFSPYEWYDAHPCNPGSEVVENNFTLLNSFWFGMGSLMQQGSELMPKALSTR) are cytoplasmic. A helical transmembrane segment spans residues 637-657 (IIGGIWWFFTLIIISSYTANL). Topologically, residues 658–820 (AAFLTVERME…KEASALGIQK (163 aa)) are extracellular. Residues alanine 691, threonine 692, and glutamate 739 each contribute to the L-glutamate site. Asparagine 752 carries an N-linked (GlcNAc...) asparagine glycan. The helical transmembrane segment at 821 to 841 (IGGIFIVLAAGLVLSVLVAVG) threads the bilayer. Residues 842-919 (EFVYKLRKTA…CSTSLAPVFP (78 aa)) are Cytoplasmic-facing. Serine 869 carries the post-translational modification Phosphoserine. Lysine 887 participates in a covalent cross-link: Glycyl lysine isopeptide (Lys-Gly) (interchain with G-Cter in SUMO1).

It belongs to the glutamate-gated ion channel (TC 1.A.10.1) family. GRIK3 subfamily. In terms of assembly, homotetramer, and heterotetramer with either GRIK4 or GRIK5. Can form functional heteromeric receptors with GRIK2. Interacts with PRKCABP. Interacts with NETO2.

Its subcellular location is the cell membrane. It is found in the postsynaptic cell membrane. It carries out the reaction Ca(2+)(in) = Ca(2+)(out). In terms of biological role, ionotropic glutamate receptor that functions as a cation-permeable ligand-gated ion channel, gated by L-glutamate and the glutamatergic agonist kainic acid. Binding of the excitatory neurotransmitter L-glutamate induces a conformation change, leading to the opening of the cation channel, and thereby converts the chemical signal to an electrical impulse. The receptor then desensitizes rapidly and enters a transient inactive state, characterized by the presence of bound agonist. In association with GRIK2, involved in presynaptic facilitation of glutamate release at hippocampal mossy fiber synapses. This is Glutamate receptor ionotropic, kainate 3 (GRIK3) from Homo sapiens (Human).